Reading from the N-terminus, the 92-residue chain is Small ribosomal subunit protein uS19c (92 aa).

Belongs to the universal ribosomal protein uS19 family.

The protein resides in the plastid. The protein localises to the chloroplast. Functionally, protein S19 forms a complex with S13 that binds strongly to the 16S ribosomal RNA. This Liriodendron tulipifera (Tuliptree) protein is Small ribosomal subunit protein uS19c.